A 74-amino-acid chain; its full sequence is Putative membrane protein insertion efficiency factor (74 aa).

The protein belongs to the UPF0161 family.

It is found in the cell membrane. In terms of biological role, could be involved in insertion of integral membrane proteins into the membrane. The sequence is that of Putative membrane protein insertion efficiency factor from Anoxybacillus flavithermus (strain DSM 21510 / WK1).